The following is a 306-amino-acid chain: Ribonuclease Z (306 aa).

Zn(2+)-binding residues include His63, His65, Asp67, His68, His141, Asp211, and His269. Asp67 functions as the Proton acceptor in the catalytic mechanism.

The protein belongs to the RNase Z family. In terms of assembly, homodimer. Zn(2+) is required as a cofactor.

The enzyme catalyses Endonucleolytic cleavage of RNA, removing extra 3' nucleotides from tRNA precursor, generating 3' termini of tRNAs. A 3'-hydroxy group is left at the tRNA terminus and a 5'-phosphoryl group is left at the trailer molecule.. Zinc phosphodiesterase, which displays some tRNA 3'-processing endonuclease activity. Probably involved in tRNA maturation, by removing a 3'-trailer from precursor tRNA. In Staphylococcus aureus (strain bovine RF122 / ET3-1), this protein is Ribonuclease Z.